A 161-amino-acid chain; its full sequence is MAQISDSLDVAPESFSTETPNEEAPKAPRAVLNVSGGAVGRRKQATARVRLVPGSGSITVNGREFADYFPNKLHQQLVNDPFKVLDLLGSYDVVARISGGGPSGQAGALRLGIARALNEIDEENNRAVLKKNGFLSRDARVKERKKAGLKKARKAPQFSKR.

2 disordered regions span residues 1 to 28 (MAQISDSLDVAPESFSTETPNEEAPKAP) and 142 to 161 (KERKKAGLKKARKAPQFSKR).

The protein belongs to the universal ribosomal protein uS9 family.

This Clavibacter sepedonicus (Clavibacter michiganensis subsp. sepedonicus) protein is Small ribosomal subunit protein uS9.